Reading from the N-terminus, the 291-residue chain is Oligopeptide transport system permease protein OppC (291 aa).

The next 6 membrane-spanning stretches (helical) occupy residues 22–42, 85–105, 116–136, 142–162, 209–229, and 247–267; these read VASL…PPLL, MLIG…VGAI, TLMW…IAIV, NSAN…MISS, ALNV…GFGI, and ATAF…ILVC. The ABC transmembrane type-1 domain maps to 81-272; that stretch reads MQKSMLIGVC…LILVCANLTG (192 aa).

The protein belongs to the binding-protein-dependent transport system permease family. OppBC subfamily. As to quaternary structure, the complex is composed of an ATP-binding protein (OppD), two transmembrane proteins (OppB and OppC) and a solute-binding protein (OppA).

It is found in the cell inner membrane. Functionally, part of the ABC transporter complex OppABCD involved in the uptake of oligopeptides. Responsible for the translocation of the substrate across the membrane. This chain is Oligopeptide transport system permease protein OppC, found in Mycobacterium bovis (strain ATCC BAA-935 / AF2122/97).